A 497-amino-acid polypeptide reads, in one-letter code: Taxane 10-beta-hydroxylase (497 aa).

C443 serves as a coordination point for heme.

This sequence belongs to the cytochrome P450 family. Requires heme as cofactor.

The enzyme catalyses taxa-4(20),11-dien-5alpha-yl acetate + reduced [NADPH--hemoprotein reductase] + O2 = 10beta-hydroxytaxa-4(20),11-dien-5alpha-yl acetate + oxidized [NADPH--hemoprotein reductase] + H2O + H(+). The protein operates within alkaloid biosynthesis; taxol biosynthesis; 10-deacetyl-2-debenzoylbaccatin III from taxa-4(20),11-dien-5alpha-ol: step 2/3. Its function is as follows. Involved in the transformation of a taxadienyl acetate by hydroxylation at C10 to yield taxadien-5-alpha-acetoxy-10-beta-ol. The chain is Taxane 10-beta-hydroxylase (CYP725A1) from Taxus cuspidata (Japanese yew).